The following is a 149-amino-acid chain: Protein K7 (149 aa).

The protein belongs to the orthopoxvirus OPG044 family. In terms of assembly, interacts with DDX3; this interaction inhibits DDX3 and suppresses DDX3-mediated IFN-beta promoter induction. Interacts with TRAF6 and IRAK2; these interactions suppress TLR-dependent NF-KappaB activation.

Its subcellular location is the host cytoplasm. Functionally, virulence factor that affects the acute immune response to infection. Bcl-2-like protein which, through its interaction with the DEAD box RNA helicase DDX3X/DDX3, prevents TBK1/IKKepsilon-mediated IRF3 activation. Contributes to virulence by binding to the host TRAF6 and IRAK2 and preventing host NF-kappa-B activation. This chain is Protein K7 (OPG044), found in Homo sapiens (Human).